A 213-amino-acid chain; its full sequence is ATP phosphoribosyltransferase (213 aa).

It belongs to the ATP phosphoribosyltransferase family. Short subfamily. In terms of assembly, heteromultimer composed of HisG and HisZ subunits.

It is found in the cytoplasm. The enzyme catalyses 1-(5-phospho-beta-D-ribosyl)-ATP + diphosphate = 5-phospho-alpha-D-ribose 1-diphosphate + ATP. Its pathway is amino-acid biosynthesis; L-histidine biosynthesis; L-histidine from 5-phospho-alpha-D-ribose 1-diphosphate: step 1/9. Functionally, catalyzes the condensation of ATP and 5-phosphoribose 1-diphosphate to form N'-(5'-phosphoribosyl)-ATP (PR-ATP). Has a crucial role in the pathway because the rate of histidine biosynthesis seems to be controlled primarily by regulation of HisG enzymatic activity. This chain is ATP phosphoribosyltransferase, found in Crocosphaera subtropica (strain ATCC 51142 / BH68) (Cyanothece sp. (strain ATCC 51142)).